Here is a 590-residue protein sequence, read N- to C-terminus: MDLEEAREFRERCSQCAAVSWGLTDEGKYYCTSCHNVTERSREVIDTGAIPNTKIQAINRGLKRKRKLEKGWDWYVCEGFQHILYQQAEALQSLGVGPELKNEVLHNFWKRYLQKSKQAYCKNPVYTSRRKTTVLEDNLSHSDWESEPELLSDMSCLSFAESGAESQPDVRTPKPFPIIKASHSETTSVCSGSLDGVEYSLRKEKGVMKMSVPRTLAFCYLSLLWQRETITLSDLLRFVEEEHIPYIHAFQHFPEEMKLYGRDKGIFAIESWPNYEVIFKKIIEVATFLDLPRFPDITENCYLHPNILCMKYLMEVNLPDEMHNVTCLVVKSTGIGEVDFLRFDPIAKKAKTVKYDVQAVAVIVVALKLLFLLDDNLEWSLSNIAKKYNEKNKEDKPWFDFRKWYQVMKKAIDEKKQKWEEARAKFLWKGEKPLYYSAIDRPVVYKRREMVVSLQKQFSTLVDSAPNVEKKKPSSFQFNWTEEDSERPCFHGHSLQGVLQQKGQSLTTKNSLYWLSTQKFCKSHCKHVTTYEESNFSLSYQFILNLFSFLLRIKTSFLHEEVSLIEKRLFKAKYNKTNKKSSRSRKTRKY.

Methionine 1 carries the post-translational modification N-acetylmethionine. An RRN7-type zinc finger spans residues glutamate 4–glutamate 39. Zn(2+) contacts are provided by cysteine 13, cysteine 16, cysteine 31, and cysteine 34. Residues arginine 40–leucine 68 form a B-reader region. The tract at residues glutamate 69–aspartate 73 is B-linker. An N-terminal cyclin fold region spans residues tryptophan 74–arginine 262. Residues aspartate 263 to leucine 373 are C-terminal cyclin fold.

Belongs to the RRN7/TAF1B family. Interacts with FLNA (via N-terminus). Component of the transcription factor SL1/TIF-IB complex, composed of TBP and at least TAF1A, TAF1B, TAF1C and TAF1D. In the complex interacts directly with TBP, TAF1A and TAF1C. Interaction of the SL1/TIF-IB subunits with TBP excludes interaction of TBP with the transcription factor IID (TFIID) subunits. Interacts with TBP and RRN3. Part of Pol I pre-initiation complex (PIC), in which Pol I core assembles with RRN3 and promoter-bound UTBF and SL1/TIF-IB complex.

Its subcellular location is the nucleus. It is found in the nucleolus. Its function is as follows. Component of RNA polymerase I core factor complex that acts as a GTF2B/TFIIB-like factor and plays a key role in multiple steps during transcription initiation such as pre-initiation complex (PIC) assembly and postpolymerase recruitment events in polymerase I (Pol I) transcription. Binds rDNA promoters and plays a role in Pol I recruitment as a component of the SL1/TIF-IB complex and, possibly, directly through its interaction with RRN3. The protein is TATA box-binding protein-associated factor RNA polymerase I subunit B (TAF1B) of Bos taurus (Bovine).